The sequence spans 561 residues: Potassium-transporting ATPase potassium-binding subunit (561 aa).

Transmembrane regions (helical) follow at residues Leu5–Leu25, Cys60–Leu80, Val86–Val106, Gly131–Ile151, Ile177–Ser197, Pro247–Thr267, Leu281–Ala301, Gly376–Gly396, Ala415–Leu435, Leu489–Gly509, and Phe531–Leu551.

The protein belongs to the KdpA family. As to quaternary structure, the system is composed of three essential subunits: KdpA, KdpB and KdpC.

The protein localises to the cell membrane. In terms of biological role, part of the high-affinity ATP-driven potassium transport (or Kdp) system, which catalyzes the hydrolysis of ATP coupled with the electrogenic transport of potassium into the cytoplasm. This subunit binds the extracellular potassium ions and delivers the ions to the membrane domain of KdpB through an intramembrane tunnel. This Nocardia farcinica (strain IFM 10152) protein is Potassium-transporting ATPase potassium-binding subunit.